We begin with the raw amino-acid sequence, 156 residues long: Small ribosomal subunit protein uS7 (156 aa).

This sequence belongs to the universal ribosomal protein uS7 family. Part of the 30S ribosomal subunit. Contacts proteins S9 and S11.

In terms of biological role, one of the primary rRNA binding proteins, it binds directly to 16S rRNA where it nucleates assembly of the head domain of the 30S subunit. Is located at the subunit interface close to the decoding center, probably blocks exit of the E-site tRNA. The protein is Small ribosomal subunit protein uS7 of Maricaulis maris (strain MCS10) (Caulobacter maris).